Reading from the N-terminus, the 272-residue chain is Shikimate dehydrogenase (NADP(+)) (272 aa).

Residues 14-16 (SKS) and threonine 61 each bind shikimate. The active-site Proton acceptor is the lysine 65. An NADP(+)-binding site is contributed by glutamate 77. Positions 86 and 102 each coordinate shikimate. Residues 126–130 (GAGGA), 149–154 (NRTVSR), and methionine 213 contribute to the NADP(+) site. Residue tyrosine 215 coordinates shikimate. Glycine 237 is an NADP(+) binding site.

The protein belongs to the shikimate dehydrogenase family. As to quaternary structure, homodimer.

It carries out the reaction shikimate + NADP(+) = 3-dehydroshikimate + NADPH + H(+). It participates in metabolic intermediate biosynthesis; chorismate biosynthesis; chorismate from D-erythrose 4-phosphate and phosphoenolpyruvate: step 4/7. In terms of biological role, involved in the biosynthesis of the chorismate, which leads to the biosynthesis of aromatic amino acids. Catalyzes the reversible NADPH linked reduction of 3-dehydroshikimate (DHSA) to yield shikimate (SA). The chain is Shikimate dehydrogenase (NADP(+)) from Escherichia coli O157:H7.